Consider the following 371-residue polypeptide: Putative 26S proteasome regulatory subunit homolog MJ1494 (371 aa).

161-168 (GPPGTGKT) is an ATP binding site.

Belongs to the AAA ATPase family.

The 26S proteasome is involved in the ATP-dependent degradation of ubiquitinated proteins. The regulatory (or ATPase) complex confers ATP dependency and substrate specificity to the 26S complex. The protein is Putative 26S proteasome regulatory subunit homolog MJ1494 of Methanocaldococcus jannaschii (strain ATCC 43067 / DSM 2661 / JAL-1 / JCM 10045 / NBRC 100440) (Methanococcus jannaschii).